The primary structure comprises 92 residues: Small integral membrane protein 12 (92 aa).

The chain crosses the membrane as a helical span at residues 12–34 (YAPYVTFPVAFVVGAVGYHLEWF).

Belongs to the SMIM12 family.

The protein localises to the membrane. The polypeptide is Small integral membrane protein 12 (SMIM12) (Bos taurus (Bovine)).